The chain runs to 416 residues: Gap junction alpha-3 protein (416 aa).

Residues 2-15 (GDWSFLGRLLENAQ) lie within the membrane without spanning it. The Cytoplasmic segment spans residues 16–19 (EHST). The chain crosses the membrane as a helical span at residues 20–40 (VIGKVWLTVLFIFRILVLGAA). Topologically, residues 41–71 (AEEVWGDEQSDFTCNTQQPGCENVCYDRAFP) are extracellular. Cystine bridges form between Cys54-Cys198, Cys61-Cys192, and Cys65-Cys187. The chain crosses the membrane as a helical span at residues 72–92 (ISHIRFWALQIIFVSTPTLIY). Over 93–158 (LGHVLHIVRM…GALLRTYVFN (66 aa)) the chain is Cytoplasmic. Residues 110–128 (EEELLRRDNPQHGRGREPM) show a composition bias toward basic and acidic residues. Residues 110–141 (EEELLRRDNPQHGRGREPMRTGSPRDPPLRDD) are disordered. A helical membrane pass occupies residues 159 to 179 (IIFKTLFEVGFIAGQYFLYGF). Over 180–207 (QLQPLYRCDRWPCPNTVDCFISRPTEKT) the chain is Extracellular. A helical transmembrane segment spans residues 208 to 228 (IFVIFMLAVACASLVLNMLEI). The Cytoplasmic portion of the chain corresponds to 229–416 (YHLGWKKLKQ…GRARPGDLAI (188 aa)). The disordered stretch occupies residues 336–416 (GAEPQTPASK…GRARPGDLAI (81 aa)). Residues 342–353 (PASKPSSAASSP) show a composition bias toward low complexity.

Belongs to the connexin family. Alpha-type (group II) subfamily. A hemichannel or connexon is composed of a hexamer of connexins. A functional gap junction is formed by the apposition of two hemichannels. Forms heteromeric channels with GJA8. Detected in eye lens (at protein level). Most abundant in lens, but also present in heart and kidney.

The protein localises to the cell membrane. Its subcellular location is the cell junction. The protein resides in the gap junction. Functionally, structural component of lens fiber gap junctions. Gap junctions are dodecameric channels that connect the cytoplasm of adjoining cells. They are formed by the docking of two hexameric hemichannels, one from each cell membrane. Small molecules and ions diffuse from one cell to a neighboring cell via the central pore. This chain is Gap junction alpha-3 protein (Gja3), found in Rattus norvegicus (Rat).